We begin with the raw amino-acid sequence, 151 residues long: Ribosome maturation factor RimP (151 aa).

Belongs to the RimP family.

The protein resides in the cytoplasm. Required for maturation of 30S ribosomal subunits. This is Ribosome maturation factor RimP from Aliivibrio fischeri (strain ATCC 700601 / ES114) (Vibrio fischeri).